Consider the following 91-residue polypeptide: Small ribosomal subunit protein uS19 (91 aa).

Belongs to the universal ribosomal protein uS19 family.

Its function is as follows. Protein S19 forms a complex with S13 that binds strongly to the 16S ribosomal RNA. This Synechococcus sp. (strain CC9311) protein is Small ribosomal subunit protein uS19.